Reading from the N-terminus, the 335-residue chain is NAC domain-containing protein 60 (335 aa).

An NAC domain is found at 14-156 (TFPGFKFSPT…ALVICRLRRN (143 aa)). A DNA-binding region spans residues 112–162 (IGTKRTLVFHIGRAPKGGRTEWLMHEYCMIGVSLDALVICRLRRNTEFQGS). A helical transmembrane segment spans residues 315-335 (ARWDVVVWLLVMIAVLVFYLV).

As to expression, expressed in roots, rosette leaves, cauline leaves, shoot apex, stems and flowers.

The protein localises to the membrane. The protein resides in the nucleus. In terms of biological role, transcriptional activator activated by proteolytic cleavage through regulated intramembrane proteolysis (RIP). Transcription factor involved in modulation of abscisic acid (ABA) signaling. Attenuates ABA sensitivity and glucose-induced ABA accumulation. Reduces the expression of ABI4 gene. This Arabidopsis thaliana (Mouse-ear cress) protein is NAC domain-containing protein 60.